We begin with the raw amino-acid sequence, 583 residues long: Extracellular serine/threonine protein kinase four-jointed (583 aa).

Residues 1-78 (MYDIKRLEAG…RRRSLQRRAC (78 aa)) lie on the Cytoplasmic side of the membrane. A helical; Signal-anchor for type II membrane protein transmembrane segment spans residues 79–99 (LLSILAAFVFGMALGVVVPMF). Topologically, residues 100-583 (GLPRHQDSPP…LGQVQKCQGS (484 aa)) are extracellular. The disordered stretch occupies residues 179-222 (RTASGRYRKGPERRLSKKMPERVQPQETSRSPTTSPTNPTSEHQ). Residues 187–199 (KGPERRLSKKMPE) show a composition bias toward basic and acidic residues. Residues 206–219 (TSRSPTTSPTNPTS) show a composition bias toward low complexity. N-linked (GlcNAc...) asparagine glycosylation is found at N310 and N379. Positions 384-421 (MQSERQAQSQPHGLLKRLGAASSPGSAHQSNAIEETGT) are disordered. N491 carries N-linked (GlcNAc...) asparagine glycosylation.

It belongs to the FJX1/FJ family. Post-translationally, proteolytically cleaved to yield a secreted protein. In terms of tissue distribution, in the eye disk, expressed in a gradient ahead of the morphogenetic furrow, high at the equator and low at the poles of the eye. In the leg disk, expressed in concentric rings, possibly corresponding to segmental boundaries. In the wing disk, expression is localized in the wing pouch; low in peripheral regions and high towards the center.

It is found in the golgi apparatus membrane. The protein resides in the secreted. The enzyme catalyses L-seryl-[protein] + ATP = O-phospho-L-seryl-[protein] + ADP + H(+). It carries out the reaction L-threonyl-[protein] + ATP = O-phospho-L-threonyl-[protein] + ADP + H(+). Golgi serine/threonine protein kinase required for intermediate growth in the proximal-distal axis. Phosphorylates specific residues within extracellular cadherin domains of Fat (ft) and Dachsous (ds) as they transit through the Golgi. Acts in ommatidial polarity determination as a secondary signal downstream of Notch, JAK/STAT and wingless. Also necessary for the initiation, up-regulation or maintenance of Notch ligand, Serrate (Ser) expression in legs, thereby participating in a feedback loop with N signaling. Sufficient for joint formation and growth in the leg. This is Extracellular serine/threonine protein kinase four-jointed from Drosophila melanogaster (Fruit fly).